The following is a 306-amino-acid chain: Mediator of RNA polymerase II transcription subunit 30 (306 aa).

Disordered stretches follow at residues 1-22 (MSGQ…FNSP) and 51-148 (QQQM…STQA). The span at 51–128 (QQQMQSGGVQ…VSSAAQSATG (78 aa)) shows a compositional bias: low complexity.

It belongs to the Mediator complex subunit 30 family. In terms of assembly, component of the Mediator complex.

It localises to the nucleus. In terms of biological role, component of the Mediator complex, a coactivator involved in the regulated transcription of nearly all RNA polymerase II-dependent genes. Mediator functions as a bridge to convey information from gene-specific regulatory proteins to the basal RNA polymerase II transcription machinery. Mediator is recruited to promoters by direct interactions with regulatory proteins and serves as a scaffold for the assembly of a functional preinitiation complex with RNA polymerase II and the general transcription factors. The sequence is that of Mediator of RNA polymerase II transcription subunit 30 (MED30) from Aedes aegypti (Yellowfever mosquito).